A 296-amino-acid chain; its full sequence is NAD kinase (296 aa).

The Proton acceptor role is filled by Asp-72. NAD(+)-binding positions include 72-73, 146-147, Arg-157, Lys-174, Asp-176, 187-192, and Gln-247; these read DG, ND, and TAYALS.

Belongs to the NAD kinase family. Requires a divalent metal cation as cofactor.

It localises to the cytoplasm. It catalyses the reaction NAD(+) + ATP = ADP + NADP(+) + H(+). Its function is as follows. Involved in the regulation of the intracellular balance of NAD and NADP, and is a key enzyme in the biosynthesis of NADP. Catalyzes specifically the phosphorylation on 2'-hydroxyl of the adenosine moiety of NAD to yield NADP. The protein is NAD kinase of Pseudomonas syringae pv. syringae (strain B728a).